The primary structure comprises 399 residues: Calsequestrin-2 (399 aa).

Residues 1 to 19 (MKRTHLFIVGIYFLSSCRA) form the signal peptide. A Phosphotyrosine modification is found at Tyr-282. The N-linked (GlcNAc...) asparagine glycan is linked to Asn-335. The tract at residues 365–399 (VLSGKINTEDDDEDDDDDDNSDEEDNDDSDDDDDE) is disordered. Residues 373 to 399 (EDDDEDDDDDDNSDEEDNDDSDDDDDE) are compositionally biased toward acidic residues. Phosphoserine is present on residues Ser-385 and Ser-393.

This sequence belongs to the calsequestrin family. As to quaternary structure, monomer, homodimer and homooligomer. Mostly monomeric in the absence of calcium. Forms higher oligomers in a calcium-dependent manner. Dimers associate to form tetramers, that then form linear homomer chains. Interacts with ASPH and TRDN. Phosphorylation in the C-terminus, probably by CK2, moderately increases calcium buffering capacity. Post-translationally, N-glycosylated.

It is found in the sarcoplasmic reticulum lumen. Functionally, calsequestrin is a high-capacity, moderate affinity, calcium-binding protein and thus acts as an internal calcium store in muscle. Calcium ions are bound by clusters of acidic residues at the protein surface, especially at the interface between subunits. Can bind around 60 Ca(2+) ions. Regulates the release of lumenal Ca(2+) via the calcium release channel RYR2; this plays an important role in triggering muscle contraction. Plays a role in excitation-contraction coupling in the heart and in regulating the rate of heart beats. In Homo sapiens (Human), this protein is Calsequestrin-2 (CASQ2).